The sequence spans 434 residues: Serine--tRNA ligase (434 aa).

Residue 239–241 participates in L-serine binding; sequence TAE. 270 to 272 is an ATP binding site; sequence RSE. Glutamate 293 provides a ligand contact to L-serine. 357–360 contributes to the ATP binding site; it reads EISS. Serine 393 serves as a coordination point for L-serine.

It belongs to the class-II aminoacyl-tRNA synthetase family. Type-1 seryl-tRNA synthetase subfamily. In terms of assembly, homodimer. The tRNA molecule binds across the dimer.

It localises to the cytoplasm. The catalysed reaction is tRNA(Ser) + L-serine + ATP = L-seryl-tRNA(Ser) + AMP + diphosphate + H(+). The enzyme catalyses tRNA(Sec) + L-serine + ATP = L-seryl-tRNA(Sec) + AMP + diphosphate + H(+). It participates in aminoacyl-tRNA biosynthesis; selenocysteinyl-tRNA(Sec) biosynthesis; L-seryl-tRNA(Sec) from L-serine and tRNA(Sec): step 1/1. In terms of biological role, catalyzes the attachment of serine to tRNA(Ser). Is also able to aminoacylate tRNA(Sec) with serine, to form the misacylated tRNA L-seryl-tRNA(Sec), which will be further converted into selenocysteinyl-tRNA(Sec). The chain is Serine--tRNA ligase from Mesorhizobium japonicum (strain LMG 29417 / CECT 9101 / MAFF 303099) (Mesorhizobium loti (strain MAFF 303099)).